A 114-amino-acid polypeptide reads, in one-letter code: Fluoride-specific ion channel FluC 2 (114 aa).

Transmembrane regions (helical) follow at residues 3-23 (YVII…ECWL), 31-51 (LMTA…WILA), 57-77 (GIEL…TFCM), and 92-112 (MIYL…GWNV). Na(+) contacts are provided by Gly-67 and Thr-70.

It belongs to the fluoride channel Fluc/FEX (TC 1.A.43) family.

It localises to the cell membrane. The catalysed reaction is fluoride(in) = fluoride(out). Na(+) is not transported, but it plays an essential structural role and its presence is essential for fluoride channel function. In terms of biological role, fluoride-specific ion channel. Important for reducing fluoride concentration in the cell, thus reducing its toxicity. The chain is Fluoride-specific ion channel FluC 2 from Shouchella clausii (strain KSM-K16) (Alkalihalobacillus clausii).